The chain runs to 470 residues: MYNIFFHRASKFPGPTIAGATSFRYHWAMSTGNVAPWLREQHARYGEVVRIAPDMISYVSPDAWKDIYAYKPGEKEQNGIDWTIPSRDDDVPSMFSEPNDAEHNRVRRLFLPAFSDRALKQQEPLLSKYSDQLVHLIRRGIDDNRDQEFDAVKLYNFTTFDIMGDLTFGEPLGLLKNSSYSEWVQNLFRDIKTAGIFLFIFDFPPLPWLVKKFSPPSIQRAHEIHKQHTVDRVNRRLEKGLDRPDIWNLVLSQPEGRGLTHPQMHANADIFMIAGTETTATLLSGLTYLLLKNPEKLQRLVEEIRGSFGSIEELTVENLARLPYLSACLSEGLRCYPPVPIGPSRVTPKTGGQVLGERVPGRVRLTIPQCAAYYSDLNFKDPYSFIPERWLPGTGYESDRKGILQPFLIGPRNCIGQNLAYHEMRLILCKLLWHYDIELCPDKGNWLLDQKMYIFWEKRPLMVKFTKARK.

Cys414 lines the heme pocket.

The protein belongs to the cytochrome P450 family. Heme serves as cofactor.

The protein operates within mycotoxin biosynthesis. Functionally, cytochrome P450 monooxygenase; part of the gene cluster that mediates the biosynthesis of fumonisins B1 (FB1), B2 (FB2), B3 (FB3), and B4 (FB4), which are carcinogenic mycotoxins. Within the pathway, FUM2 performs the C-10 hydroxylation present in FB2 and FB4 and which occurs early in the biosynthesis. The biosynthesis starts with the FUM1-catalyzed carbon chain assembly from one molecule of acetyl-CoA, eight molecules of malonyl-CoA, and two molecules of methionine (in S-adenosyl form). The C18 polyketide chain is released from the enzyme by a nucleophilic attack of a carbanion, which is derived from R-carbon of alanine by decarboxylation, on the carbonyl carbon of polyketide acyl chain. This step is catalyzed by the pyridoxal 5'-phosphate-dependent aminoacyl transferase FUM8. The resultant 3-keto intermediate is then stereospecifically reduced to a 3-hydroxyl product by reductase FUM13. Subsequent oxidations at C-10 by the cytochrome P450 monooxygenase FUM2, C-14 and C-15 by FUM6, FUM12 or FUM15, tricarballylic esterification of the hydroxyl groups on C-14 and C-15 by acyltransferase FUM14, and C-5 hydroxylation by 2-keto-glutarate-dependent dioxygenase FUM3 furnish the biosynthesis of fumonisins. The tricarballylic moieties are most likely derived from the citric acid cycle, and their addition to the carbon backbone may involve FUM7, FUM10, FUM11 and FUM14. The chain is Cytochrome P450 monooxygenase FUM2 from Gibberella moniliformis (strain M3125 / FGSC 7600) (Maize ear and stalk rot fungus).